The primary structure comprises 704 residues: D-(-)-3-hydroxybutyrate oligomer hydrolase (704 aa).

The N-terminal stretch at 1–31 is a signal peptide; sequence MTTTNRNNLKLTALTAAVLTLSACGGSDAVA. Ser309 serves as the catalytic Charge relay system.

The protein belongs to the D-(-)-3-hydroxybutyrate oligomer hydrolase family.

It localises to the secreted. It catalyses the reaction (3R)-hydroxybutanoate dimer + H2O = 2 (R)-3-hydroxybutanoate + H(+). It participates in lipid metabolism; butanoate metabolism. In terms of biological role, participates in the degradation of poly-3-hydroxybutyrate (PHB). It works downstream of poly(3-hydroxybutyrate) depolymerase, hydrolyzing D(-)-3-hydroxybutyrate oligomers of various length (3HB-oligomers) into 3HB-monomers. The sequence is that of D-(-)-3-hydroxybutyrate oligomer hydrolase from Albidiferax ferrireducens (strain ATCC BAA-621 / DSM 15236 / T118) (Rhodoferax ferrireducens).